The primary structure comprises 600 residues: Novobiocin biosynthesis protein H (600 aa).

The disordered stretch occupies residues 505–526; sequence GGKTDRAGLPDPVKATQPAGLG. The Carrier domain maps to 526-600; it reads GPRTPAEKVL…QLAAIATLEE (75 aa). Serine 561 carries the post-translational modification O-(pantetheine 4'-phosphoryl)serine.

This sequence belongs to the ATP-dependent AMP-binding enzyme family.

It participates in antibiotic biosynthesis; novobiocin biosynthesis. Its function is as follows. Together with NovI, involved in the formation of a beta-OH-Tyr intermediate in the novobiocin biosynthesis pathway, an aminocoumarin family antibiotic that targets bacterial DNA gyrases. The ATP-dependent AMP-binding region activates L-Tyr as L-tyrosyl-AMP and then transfers the L-tyrosyl group to the acyl carrier domain through thioester formation to form a tyrosyl-S intermediate that is covalently tethered to NovH (L-Tyr-S-NovH). The protein is Novobiocin biosynthesis protein H (novH) of Streptomyces niveus (Streptomyces spheroides).